Here is a 338-residue protein sequence, read N- to C-terminus: Beta-ketoacyl-[acyl-carrier-protein] synthase III (338 aa).

Residues cysteine 119 and histidine 261 contribute to the active site. Residues 262–266 (QANQR) are ACP-binding. The active site involves asparagine 291.

This sequence belongs to the thiolase-like superfamily. FabH family. Homodimer.

Its subcellular location is the cytoplasm. It carries out the reaction malonyl-[ACP] + acetyl-CoA + H(+) = 3-oxobutanoyl-[ACP] + CO2 + CoA. The protein operates within lipid metabolism; fatty acid biosynthesis. In terms of biological role, catalyzes the condensation reaction of fatty acid synthesis by the addition to an acyl acceptor of two carbons from malonyl-ACP. Catalyzes the first condensation reaction which initiates fatty acid synthesis and may therefore play a role in governing the total rate of fatty acid production. Possesses both acetoacetyl-ACP synthase and acetyl transacylase activities. Its substrate specificity determines the biosynthesis of branched-chain and/or straight-chain of fatty acids. The polypeptide is Beta-ketoacyl-[acyl-carrier-protein] synthase III (Prochlorococcus marinus (strain NATL2A)).